A 167-amino-acid polypeptide reads, in one-letter code: Large ribosomal subunit protein uL10 (167 aa).

The protein belongs to the universal ribosomal protein uL10 family. As to quaternary structure, part of the ribosomal stalk of the 50S ribosomal subunit. The N-terminus interacts with L11 and the large rRNA to form the base of the stalk. The C-terminus forms an elongated spine to which L12 dimers bind in a sequential fashion forming a multimeric L10(L12)X complex.

Functionally, forms part of the ribosomal stalk, playing a central role in the interaction of the ribosome with GTP-bound translation factors. This chain is Large ribosomal subunit protein uL10, found in Ligilactobacillus salivarius (strain UCC118) (Lactobacillus salivarius).